The primary structure comprises 114 residues: Helper of Tim protein 13 (114 aa).

Residues 10 to 90 (LVDKESRCEH…DSLQCPNCRS (81 aa)) form a CHY-type; degenerate zinc finger. Residues C17, H19, C40, C43, C67, C70, C85, and C88 each contribute to the Zn(2+) site.

As to quaternary structure, interacts with the small Tim proteins.

It localises to the mitochondrion intermembrane space. Its subcellular location is the mitochondrion membrane. Its function is as follows. Required for the assembly or recycling of the small Tim proteins in the mitochondrial intermembrane, thereby participating in the import and insertion of multi-pass transmembrane proteins into the mitochondrial inner membrane. This Kluyveromyces lactis (strain ATCC 8585 / CBS 2359 / DSM 70799 / NBRC 1267 / NRRL Y-1140 / WM37) (Yeast) protein is Helper of Tim protein 13 (HOT13).